The primary structure comprises 341 residues: Serpentine receptor class beta-3 (341 aa).

At Met-1–Ser-23 the chain is on the extracellular side. A glycan (N-linked (GlcNAc...) asparagine) is linked at Asn-5. Residues Ser-24–Thr-44 traverse the membrane as a helical segment. Residues Arg-45 to Cys-58 lie on the Cytoplasmic side of the membrane. A helical transmembrane segment spans residues Leu-59–Phe-79. The Extracellular portion of the chain corresponds to Tyr-80–Trp-103. Asn-97 carries an N-linked (GlcNAc...) asparagine glycan. The helical transmembrane segment at Gly-104–Ile-124 threads the bilayer. At Glu-125 to Thr-141 the chain is on the cytoplasmic side. Residues Phe-142 to Val-162 form a helical membrane-spanning segment. Over Tyr-163–Asn-187 the chain is Extracellular. Residues Met-188–Leu-208 traverse the membrane as a helical segment. Topologically, residues Arg-209–Thr-237 are cytoplasmic. A helical transmembrane segment spans residues Phe-238–Val-258. The Extracellular portion of the chain corresponds to Arg-259–Arg-276. Residues Asn-267 and Asn-271 are each glycosylated (N-linked (GlcNAc...) asparagine). A helical transmembrane segment spans residues Gly-277–Leu-297. At Arg-298–Pro-341 the chain is on the cytoplasmic side.

The protein belongs to the nematode receptor-like protein srb family. Expressed throughout the head.

It is found in the cell membrane. The protein localises to the perikaryon. Its subcellular location is the cell projection. The protein resides in the dendrite. In terms of biological role, G-protein coupled receptor. This is Serpentine receptor class beta-3 from Caenorhabditis elegans.